Consider the following 188-residue polypeptide: Adenine phosphoribosyltransferase (188 aa).

The protein belongs to the purine/pyrimidine phosphoribosyltransferase family. As to quaternary structure, homodimer.

The protein resides in the cytoplasm. The catalysed reaction is AMP + diphosphate = 5-phospho-alpha-D-ribose 1-diphosphate + adenine. It functions in the pathway purine metabolism; AMP biosynthesis via salvage pathway; AMP from adenine: step 1/1. Catalyzes a salvage reaction resulting in the formation of AMP, that is energically less costly than de novo synthesis. The polypeptide is Adenine phosphoribosyltransferase (Burkholderia thailandensis (strain ATCC 700388 / DSM 13276 / CCUG 48851 / CIP 106301 / E264)).